The chain runs to 390 residues: Multidrug export protein EmrA (390 aa).

The Cytoplasmic portion of the chain corresponds to Met-1–Leu-24. Residues Leu-25 to Val-45 traverse the membrane as a helical segment. Residues Leu-46–Gly-390 are Periplasmic-facing. The stretch at Ile-120–Gln-180 forms a coiled coil.

The protein belongs to the membrane fusion protein (MFP) (TC 8.A.1) family. As to quaternary structure, homodimer and homotrimer. Part of the tripartite efflux system EmrAB-TolC, which is composed of an inner membrane transporter, EmrB, a periplasmic membrane fusion protein, EmrA, and an outer membrane component, TolC. The complex forms a large protein conduit and can translocate molecules across both the inner and outer membranes. Interacts with EmrB. EmrAB complex forms a dimer in vitro.

Its subcellular location is the cell inner membrane. In terms of biological role, part of the tripartite efflux system EmrAB-TolC, which confers resistance to antibiotics such as CCCP, FCCP, 2,4-dinitrophenol and nalidixic acid. EmrA is a drug-binding protein that provides a physical link between EmrB and TolC. The polypeptide is Multidrug export protein EmrA (emrA) (Escherichia coli (strain K12)).